Consider the following 498-residue polypeptide: Glycerol kinase (498 aa).

Position 12 (Thr12) interacts with ADP. Positions 12, 13, and 14 each coordinate ATP. Residue Thr12 participates in sn-glycerol 3-phosphate binding. Arg16 lines the ADP pocket. Residues Arg82, Glu83, Tyr134, and Asp243 each coordinate sn-glycerol 3-phosphate. Glycerol is bound by residues Arg82, Glu83, Tyr134, Asp243, and Gln244. ADP is bound by residues Thr265 and Gly308. Positions 265, 308, 312, and 409 each coordinate ATP. The ADP site is built by Gly409 and Asn413.

The protein belongs to the FGGY kinase family. Homotetramer and homodimer (in equilibrium).

It carries out the reaction glycerol + ATP = sn-glycerol 3-phosphate + ADP + H(+). It participates in polyol metabolism; glycerol degradation via glycerol kinase pathway; sn-glycerol 3-phosphate from glycerol: step 1/1. Activated by phosphorylation and inhibited by fructose 1,6-bisphosphate (FBP). Key enzyme in the regulation of glycerol uptake and metabolism. Catalyzes the phosphorylation of glycerol to yield sn-glycerol 3-phosphate. This chain is Glycerol kinase, found in Clostridium botulinum (strain Langeland / NCTC 10281 / Type F).